The sequence spans 356 residues: Histidinol-phosphate aminotransferase (356 aa).

Lysine 214 carries the post-translational modification N6-(pyridoxal phosphate)lysine.

Belongs to the class-II pyridoxal-phosphate-dependent aminotransferase family. Histidinol-phosphate aminotransferase subfamily. In terms of assembly, homodimer. Pyridoxal 5'-phosphate serves as cofactor.

It carries out the reaction L-histidinol phosphate + 2-oxoglutarate = 3-(imidazol-4-yl)-2-oxopropyl phosphate + L-glutamate. The protein operates within amino-acid biosynthesis; L-histidine biosynthesis; L-histidine from 5-phospho-alpha-D-ribose 1-diphosphate: step 7/9. This chain is Histidinol-phosphate aminotransferase, found in Escherichia coli O9:H4 (strain HS).